Consider the following 117-residue polypeptide: Nascent polypeptide-associated complex protein (117 aa).

Residues 3-72 (PVNPRDLEKM…YTVEKPREET (70 aa)) form the NAC-A/B domain.

It belongs to the NAC-alpha family. Homodimer. Interacts with the ribosome. Binds ribosomal RNA.

In terms of biological role, contacts the emerging nascent chain on the ribosome. The protein is Nascent polypeptide-associated complex protein of Aeropyrum pernix (strain ATCC 700893 / DSM 11879 / JCM 9820 / NBRC 100138 / K1).